The chain runs to 462 residues: Transcription factor-like protein EUC1 (462 aa).

Disordered stretches follow at residues 11-43 (GFGG…TTSP) and 66-97 (RPTD…GRIK). Phosphoserine is present on residues serine 17 and serine 23. Residues 26-35 (DSERRNHDLG) are compositionally biased toward basic and acidic residues. The tract at residues 81-140 (SASATEPTNRIGPGRIKETPETNFNAFLIAQLTRMEEQNANLKEEISLMKKEQELFFLEN) is homodimerization region. Residues 105–135 (NAFLIAQLTRMEEQNANLKEEISLMKKEQEL) are a coiled coil. Disordered stretches follow at residues 190–214 (QEAA…STNW) and 226–289 (GDPR…RNRR). Residues 197–214 (NPSTSTQAHQSQSRSTNW) show a composition bias toward polar residues. Residue lysine 231 forms a Glycyl lysine isopeptide (Lys-Gly) (interchain with G-Cter in SUMO) linkage. Residues serine 237 and serine 249 each carry the phosphoserine modification. Residues 240 to 251 (ENGEYDGNESDE) show a composition bias toward acidic residues. The segment covering 252–282 (NATTRNLPLNNPDSVSNADDSNNQLDGTGNE) has biased composition (polar residues). Threonine 254 bears the Phosphothreonine mark. The segment at 296–385 (YKLNRAIQNV…QAIKVVENIR (90 aa)) is GCR1 DNA-binding region. Polar residues predominate over residues 441–455 (SLQQPHSIPNSSTGT). The segment at 441-462 (SLQQPHSIPNSSTGTPEHDQDT) is disordered.

In terms of assembly, homodimer. Interacts with SLX5. Sumoylated at Lys-231 and subsequently ubiquitinated by the SUMO-targeted ubiquitin ligase (STUbL) complex SLX5/SLX8.

The protein resides in the chromosome. Its function is as follows. Transcription factor-like protein that binds to specific DNA motifs called ub-HS-motif associated with several locations where proteins other than histone H2B are ubiquitinated (ub-hotspots). Ubiquitination at these sites depends on the SUMO-targeted ubiquitin ligase (STUbL) complex SLX5/SLX8 and protein turnover on the CDC48 segregase. UBC9, SIZ1, or SIZ2 sumoylate DNA-bound EUC1 to stabilize its DNA-binding. Sumoylated EUC1 acts a cofactor required for the recruitment of the SLX5/SLX8 STUbL complex via specific contacts between EUC1 and SLX5, as well as an additional SUMO-mediated interaction. SLX5/SLX8 then ubiquitinates EUC1 and presumably other targets at ub-hotspots, and the CDC48/UFD1/NPL4 complex, together with UBX4 and UBX5, removes Lys-48-linked ubiquitinated proteins from chromatin. Ubiquitinated proteins could be either degraded by the proteasome or recycled by deubiquitination. EUC1 itself does not seem to underlie extensive turnover, as it is a very stable protein. EUC1 is able to act as a transcription factor, but its function at ub-hotspots does not seem to depend on this ability. EUC1-mediated ub-hotspots are crucial during stress responses when gene expression control is impaired. This is Transcription factor-like protein EUC1 from Saccharomyces cerevisiae (strain ATCC 204508 / S288c) (Baker's yeast).